Consider the following 509-residue polypeptide: UDP-N-acetylmuramyl-tripeptide synthetase (509 aa).

Gly124–Ser130 lines the ATP pocket. UDP-N-acetyl-alpha-D-muramoyl-L-alanyl-D-glutamate is bound by residues Thr164 to Thr165, Ser191, and Arg199. Lys231 is modified (N6-carboxylysine).

This sequence belongs to the MurCDEF family. MurE subfamily. In terms of processing, carboxylation is probably crucial for Mg(2+) binding and, consequently, for the gamma-phosphate positioning of ATP.

It is found in the cytoplasm. The protein operates within cell wall biogenesis; peptidoglycan biosynthesis. In terms of biological role, catalyzes the addition of an amino acid to the nucleotide precursor UDP-N-acetylmuramoyl-L-alanyl-D-glutamate (UMAG) in the biosynthesis of bacterial cell-wall peptidoglycan. The sequence is that of UDP-N-acetylmuramyl-tripeptide synthetase from Tropheryma whipplei (strain Twist) (Whipple's bacillus).